Consider the following 88-residue polypeptide: Small ribosomal subunit protein bS20 (88 aa).

Over residues 1 to 11 (MANIKSSEKDI) the composition is skewed to basic and acidic residues. Disordered stretches follow at residues 1-31 (MANI…LRTQ) and 69-88 (SKNA…SSAA).

Belongs to the bacterial ribosomal protein bS20 family.

In terms of biological role, binds directly to 16S ribosomal RNA. The polypeptide is Small ribosomal subunit protein bS20 (Leptospira interrogans serogroup Icterohaemorrhagiae serovar copenhageni (strain Fiocruz L1-130)).